We begin with the raw amino-acid sequence, 470 residues long: Protein ASPARTIC PROTEASE IN GUARD CELL 2 (470 aa).

The signal sequence occupies residues 1-19; sequence MLLPLFFFFLHLHLHLSSS. A Peptidase A1 domain is found at 131 to 466; it reads YFVRIGVGSP…DGANGFVGFG (336 aa). Residue aspartate 149 is part of the active site. 6 cysteine pairs are disulfide-bonded: cysteine 159–cysteine 162, cysteine 165–cysteine 239, cysteine 186–cysteine 204, cysteine 191–cysteine 199, cysteine 278–cysteine 470, and cysteine 389–cysteine 431. Aspartate 350 is a catalytic residue.

Belongs to the peptidase A1 family.

Aspartic protease that may be involved in drought avoidance through abscisic acid signaling. The polypeptide is Protein ASPARTIC PROTEASE IN GUARD CELL 2 (ASPG2) (Arabidopsis thaliana (Mouse-ear cress)).